The sequence spans 117 residues: Large ribosomal subunit protein bL19 (117 aa).

It belongs to the bacterial ribosomal protein bL19 family.

Its function is as follows. This protein is located at the 30S-50S ribosomal subunit interface and may play a role in the structure and function of the aminoacyl-tRNA binding site. The polypeptide is Large ribosomal subunit protein bL19 (Alkalilimnicola ehrlichii (strain ATCC BAA-1101 / DSM 17681 / MLHE-1)).